Consider the following 295-residue polypeptide: Indole-3-glycerol phosphate synthase (295 aa).

Belongs to the TrpC family.

It carries out the reaction 1-(2-carboxyphenylamino)-1-deoxy-D-ribulose 5-phosphate + H(+) = (1S,2R)-1-C-(indol-3-yl)glycerol 3-phosphate + CO2 + H2O. The protein operates within amino-acid biosynthesis; L-tryptophan biosynthesis; L-tryptophan from chorismate: step 4/5. The sequence is that of Indole-3-glycerol phosphate synthase from Prochlorococcus marinus (strain MIT 9211).